Here is a 554-residue protein sequence, read N- to C-terminus: Bifunctional epoxide hydrolase 2 (554 aa).

The segment at 1–224 (MALRVAAFDL…KVTGTQFPEA (224 aa)) is phosphatase. Mg(2+) is bound by residues D9 and D11. At K55 the chain carries N6-succinyllysine. 123-124 (TN) is a phosphate binding site. Position 176 is an N6-acetyllysine; alternate (K176). Residue K176 is modified to N6-succinyllysine; alternate. D185 is a Mg(2+) binding site. Residues K191 and K215 each carry the N6-acetyllysine modification. An epoxide hydrolase region spans residues 233–554 (NDVSHGYVTV…VQNPSVTSKI (322 aa)). One can recognise an AB hydrolase-1 domain in the interval 257–530 (PALCLCHGFP…CGHWTQIEKP (274 aa)). The active-site Nucleophile is the D333. A Phosphoserine modification is found at S368. At K371 the chain carries N6-succinyllysine. Residue Y381 coordinates substrate. N6-succinyllysine occurs at positions 420 and 454. Residue Y465 is the Proton donor of the active site. K504 carries the N6-succinyllysine modification. Position 508 is an N6-acetyllysine; alternate (K508). Residue K508 is modified to N6-succinyllysine; alternate. Residue C521 is the site of S-(15-deoxy-Delta12,14-prostaglandin J2-9-yl)cysteine attachment. The Proton acceptor role is filled by H523. The short motif at 552 to 554 (SKI) is the Microbody targeting signal element. K553 is modified (N6-succinyllysine).

The protein belongs to the AB hydrolase superfamily. Epoxide hydrolase family. As to quaternary structure, homodimer. Mg(2+) serves as cofactor. In terms of processing, the N-terminus is blocked. Post-translationally, the covalent modification of cysteine by 15-deoxy-Delta12,14-prostaglandin-J2 is autocatalytic and reversible. It may occur as an alternative to other cysteine modifications, such as S-nitrosylation and S-palmitoylation. Detected in liver, intestine, ovary and kidney. Detected at low levels in heart and muscle.

It is found in the cytoplasm. The protein localises to the peroxisome. The catalysed reaction is an epoxide + H2O = an ethanediol. It catalyses the reaction (9S,10S)-10-hydroxy-9-(phosphooxy)octadecanoate + H2O = (9S,10S)-9,10-dihydroxyoctadecanoate + phosphate. It carries out the reaction 8-hydroxy-(11S,12S)-epoxy-(5Z,9E,14Z)-eicosatrienoate + H2O = (8,11R,12S)-trihydroxy-(5Z,9E,14Z)-eicosatrienoate. The enzyme catalyses 10-hydroxy-(11S,12S)-epoxy- (5Z,8Z,14Z)-eicosatrienoate + H2O = (10,11S,12R)-trihydroxy-(5Z,8Z,14Z)-eicosatrienoate. The catalysed reaction is (8S,9R)-epoxy-(5Z,11Z,14Z)-eicosatrienoate + H2O = (8S,9S)-dihydroxy-(5Z,11Z,14Z)-eicosatrienoate. It catalyses the reaction (11S,12R)-epoxy-(5Z,8Z,14Z)-eicosatrienoate + H2O = (11R,12R)-dihydroxy-(5Z,8Z,14Z)-eicosatrienoate. It carries out the reaction (11S,12R)-epoxy-(5Z,8Z,14Z)-eicosatrienoate + H2O = (11S,12S)-dihydroxy-(5Z,8Z,14Z)-eicosatrienoate. The enzyme catalyses (14S,15R)-epoxy-(5Z,8Z,11Z)-eicosatrienoate + H2O = (14R,15R)-dihydroxy-(5Z,8Z,11Z)-eicosatrienoate. The catalysed reaction is (14S,15R)-epoxy-(5Z,8Z,11Z)-eicosatrienoate + H2O = (14S,15S)-dihydroxy-(5Z,8Z,11Z)-eicosatrienoate. It catalyses the reaction (11R,12S)-epoxy-(5Z,8Z,14Z)-eicosatrienoate + H2O = (11S,12S)-dihydroxy-(5Z,8Z,14Z)-eicosatrienoate. It carries out the reaction (11R,12S)-epoxy-(5Z,8Z,14Z)-eicosatrienoate + H2O = (11R,12R)-dihydroxy-(5Z,8Z,14Z)-eicosatrienoate. The enzyme catalyses (8S,9R)-epoxy-(5Z,11Z,14Z)-eicosatrienoate + H2O = (8R,9R)-dihydroxy-(5Z,11Z,14Z)-eicosatrienoate. The catalysed reaction is 12-phosphooxy-(9Z)-octadecenoate + H2O = 12-hydroxy-(9Z)-octadecenoate + phosphate. It catalyses the reaction 12-phosphooxy-(9E)-octadecenoate + H2O = 12-hydroxy-(9E)-octadecenoate + phosphate. It carries out the reaction 12-(phosphooxy)octadecanoate + H2O = 12-hydroxyoctadecanoate + phosphate. The enzyme catalyses 8,9-epoxy-(5Z,11Z,14Z)-eicosatrienoate + H2O = 8,9-dihydroxy-(5Z,11Z,14Z)-eicosatrienoate. The catalysed reaction is 11,12-epoxy-(5Z,8Z,14Z)-eicosatrienoate + H2O = 11,12-dihydroxy-(5Z,8Z,14Z)-eicosatrienoate. It catalyses the reaction 14,15-epoxy-(5Z,8Z,11Z)-eicosatrienoate + H2O = 14,15-dihydroxy-(5Z,8Z,11Z)-eicosatrienoate. It carries out the reaction 9,10-epoxy-(12Z)-octadecenoate + H2O = 9,10-dihydroxy-(12Z)-octadecenoate. The enzyme catalyses 1-tetradecanoyl-sn-glycerol 3-phosphate + H2O = 1-tetradecanoyl-sn-glycerol + phosphate. The catalysed reaction is 1-octadecanoyl-sn-glycero-3-phosphate + H2O = 1-octadecanoyl-sn-glycerol + phosphate. It catalyses the reaction 1-(5Z,8Z,11Z,14Z-eicosatetraenoyl)-sn-glycero-3-phosphate + H2O = 1-(5Z,8Z,11Z,14Z-eicosatetraenoyl)-sn-glycerol + phosphate. It carries out the reaction 1-hexadecanoyl-sn-glycero-3-phosphate + H2O = 1-hexadecanoyl-sn-glycerol + phosphate. The enzyme catalyses 1-(9Z-octadecenoyl)-sn-glycero-3-phosphate + H2O = 1-(9Z-octadecenoyl)-sn-glycerol + phosphate. The catalysed reaction is (14R,15S)-epoxy-(5Z,8Z,11Z)-eicosatrienoate + H2O = (14R,15R)-dihydroxy-(5Z,8Z,11Z)-eicosatrienoate. With respect to regulation, inhibited by 1-(1-acetylpiperidin-4-yl)-3-(4-(trifl uoromethoxy)phenyl)urea (TPAU), 1-cyclohexyl-3-dodecylurea (CDU), 12-(3-adamantan-1-yl-ureido)-dodecanoic acid (AUDA), 1-((3S, 5S, 7S)-adamantan-1-yl)-3-(5-(2-(2-ethoxyethoxy) ethoxy)pentyl)urea (AEPU), N-adamantyl-N[']-cyclohexyl urea (ACU), 4-(((1S, 4S)-4-(3-((3S, 5S, 7S)-adamantan-1-yl) ureido)cyclohexyl)oxy)benzoic acid (c-AUCB), 4-(((1R, 4R)-4-(3-((3S, 5S, 7S)-adamantan-1-yl)ureido)cyclohexyl)oxy)benzoic acid (t-AUCB), 4-(((1R, 4R)-4-(3-(4(trifluoromethoxy)phenyl)ureido)cyclohexyl)oxy)benzoic acid (t-TAUCB) and to a lesser extent by 8-(3-((3S, 5S, 7S)-adamantan-1-yl)ureido) octanoic acid (AUOA). Phosphatase activity is inhibited by dodecyl-phosphate, phospholipids such as phospho-lysophosphatidic acids and fatty acids such as palmitic acid and lauric acid. Its function is as follows. Bifunctional enzyme. The C-terminal domain has epoxide hydrolase activity and acts on epoxides (alkene oxides, oxiranes) and arene oxides. Plays a role in xenobiotic metabolism by degrading potentially toxic epoxides. Also determines steady-state levels of physiological mediators. Bifunctional enzyme. The N-terminal domain has lipid phosphatase activity, with the highest activity towards threo-9,10-phosphonooxy-hydroxy-octadecanoic acid, followed by erythro-9,10-phosphonooxy-hydroxy-octadecanoic acid, 12-phosphonooxy-octadec-9Z-enoic acid and 12-phosphonooxy-octadec-9E-enoic acid. Has phosphatase activity toward lyso-glycerophospholipids with also some lower activity toward lysolipids of sphingolipid and isoprenoid phosphates. This is Bifunctional epoxide hydrolase 2 from Mus musculus (Mouse).